Here is a 374-residue protein sequence, read N- to C-terminus: MENNKKNNQKQNSIDETEFPNSKVLLVSVKRTRRFLERTARELLAGGTRYIILSGLGDALPLCVQLQASLQSKNAATVVKIETSYSYFNTNYSYTPGLKIYMEKHPEFKGSRISPGYVSFCEKPDKFTPIFDETPNEYICSVNAGDNNLHVGGEGINAAFSELLSAHGHEVDKYESLFKELLSKAVKENSEKADDEVKSVLYESVEKKYPDVKLALCRVRNSLKKGSDNTTGSVFIVTFKKKFPHKKEKNMGMVYVVGPKGKNFNSVEDFLDAVHETAENLMTALCDYNGLVKREEIKHVRMNTCRICLFSGHAFKHSNASKLDVAKSILNGLAVGYRHGPSPRLNFAYDENVFKDAWIETTGLQVFNHNEKEQ.

The protein belongs to the histone-like Alba family.

The protein resides in the cytoplasm. It is found in the cell cortex. The protein localises to the perinuclear region. Possesses DNA- and RNA-binding activities. Binds to DNA with relaxed sequence specificity. May associate with the subtelomeric TARE6 repeats. Regulates the abundance of transcript sub-populations in a stage-specific manner. Regulates activation of male gametocytes. Participates in the coordination of sporozoite development in the oocyst. The protein is DNA/RNA-binding protein ALBA4 of Plasmodium yoelii yoelii.